The primary structure comprises 301 residues: Acetylglutamate kinase (301 aa).

Residues 72-73 (GG), R94, and N199 contribute to the substrate site.

Belongs to the acetylglutamate kinase family. ArgB subfamily.

The protein localises to the cytoplasm. The catalysed reaction is N-acetyl-L-glutamate + ATP = N-acetyl-L-glutamyl 5-phosphate + ADP. It participates in amino-acid biosynthesis; L-arginine biosynthesis; N(2)-acetyl-L-ornithine from L-glutamate: step 2/4. Its function is as follows. Catalyzes the ATP-dependent phosphorylation of N-acetyl-L-glutamate. This is Acetylglutamate kinase from Bartonella tribocorum (strain CIP 105476 / IBS 506).